Here is a 104-residue protein sequence, read N- to C-terminus: NADH-quinone oxidoreductase subunit K (104 aa).

A run of 3 helical transmembrane segments spans residues 4–24, 31–51, and 67–87; these read VPASAYLTLAIILFCIGLFGA, VIVLVCIELMLNAANLNLVAF, and LFTMAVAAAEAAVGLAILIAL.

The protein belongs to the complex I subunit 4L family. As to quaternary structure, NDH-1 is composed of 14 different subunits. Subunits NuoA, H, J, K, L, M, N constitute the membrane sector of the complex.

Its subcellular location is the cell membrane. It catalyses the reaction a quinone + NADH + 5 H(+)(in) = a quinol + NAD(+) + 4 H(+)(out). Its function is as follows. NDH-1 shuttles electrons from NADH, via FMN and iron-sulfur (Fe-S) centers, to quinones in the respiratory chain. The immediate electron acceptor for the enzyme in this species is believed to be a menaquinone. Couples the redox reaction to proton translocation (for every two electrons transferred, four hydrogen ions are translocated across the cytoplasmic membrane), and thus conserves the redox energy in a proton gradient. The protein is NADH-quinone oxidoreductase subunit K of Bacillus cereus (strain G9842).